The following is a 215-amino-acid chain: 3-isopropylmalate dehydratase small subunit (215 aa).

Belongs to the LeuD family. LeuD type 1 subfamily. Heterodimer of LeuC and LeuD.

The enzyme catalyses (2R,3S)-3-isopropylmalate = (2S)-2-isopropylmalate. Its pathway is amino-acid biosynthesis; L-leucine biosynthesis; L-leucine from 3-methyl-2-oxobutanoate: step 2/4. Functionally, catalyzes the isomerization between 2-isopropylmalate and 3-isopropylmalate, via the formation of 2-isopropylmaleate. The polypeptide is 3-isopropylmalate dehydratase small subunit (Xylella fastidiosa (strain 9a5c)).